The primary structure comprises 370 residues: MTNANVDATPLTTKPSQDGFYMPAEWAAQQAVWMIWPYRPDNWRSAGAYAQATFAKVADAIGAATPVYMGVPKAFLAEAKTVMPSHVTLVEMDSNDCWARDTGPTVVVNDNGECRGVDWGFNAWGGHNGGLYFPWDKDEQVAQQMLKQHGFARYSAPLILEGGSIHVDGEGTCMTSAECLLNANRNPDLTKEQIEDLLRDYLNVKQFIWLQDGVYMDETDGHIDNMCCFARPGEVILHWTDDETDPQYSRSKAAFDVLQNTVDAQGRKLKIHLLPQPGPLYCTEEESKGVTEGTGVPRTAGERLAGSYVNFLITNNRIVFPLLDPATDDIAAQKLQEIFPEYEIVGVPAREILLGGGNIHCITQQIPSGK.

The active-site Amidino-cysteine intermediate is C361.

This sequence belongs to the agmatine deiminase family.

The enzyme catalyses agmatine + H2O = N-carbamoylputrescine + NH4(+). The protein is Putative agmatine deiminase of Shewanella baltica (strain OS223).